We begin with the raw amino-acid sequence, 289 residues long: Acetyl-coenzyme A carboxylase carboxyl transferase subunit beta (289 aa).

Positions 34–289 constitute a CoA carboxyltransferase N-terminal domain; it reads MWVKCNKCGE…KLINMHQNSF (256 aa). 4 residues coordinate Zn(2+): Cys-38, Cys-41, Cys-57, and Cys-60. Residues 38 to 60 form a C4-type zinc finger; it reads CNKCGEILYQNDLEKNYMVCNLC.

The protein belongs to the AccD/PCCB family. Acetyl-CoA carboxylase is a heterohexamer composed of biotin carboxyl carrier protein (AccB), biotin carboxylase (AccC) and two subunits each of ACCase subunit alpha (AccA) and ACCase subunit beta (AccD). It depends on Zn(2+) as a cofactor.

The protein localises to the cytoplasm. The enzyme catalyses N(6)-carboxybiotinyl-L-lysyl-[protein] + acetyl-CoA = N(6)-biotinyl-L-lysyl-[protein] + malonyl-CoA. It participates in lipid metabolism; malonyl-CoA biosynthesis; malonyl-CoA from acetyl-CoA: step 1/1. Its function is as follows. Component of the acetyl coenzyme A carboxylase (ACC) complex. Biotin carboxylase (BC) catalyzes the carboxylation of biotin on its carrier protein (BCCP) and then the CO(2) group is transferred by the transcarboxylase to acetyl-CoA to form malonyl-CoA. This chain is Acetyl-coenzyme A carboxylase carboxyl transferase subunit beta, found in Clostridium botulinum (strain Kyoto / Type A2).